A 354-amino-acid polypeptide reads, in one-letter code: Protein NDH-DEPENDENT CYCLIC ELECTRON FLOW 5 (354 aa).

The transit peptide at 1–49 (MALVHYMNVSRSTFPLSRSSKINLSSSFASLPLQFHKNIKRLESSVPPS) directs the protein to the chloroplast.

The protein localises to the plastid. The protein resides in the chloroplast thylakoid membrane. Its function is as follows. Required for both formation and activity of the chloroplast NAD(P)H dehydrogenase (NDH) complex of the photosynthetic electron transport chain. May function in assembly or stabilization of the NDH complex. This Arabidopsis thaliana (Mouse-ear cress) protein is Protein NDH-DEPENDENT CYCLIC ELECTRON FLOW 5.